We begin with the raw amino-acid sequence, 99 residues long: Ribosomal processing cysteine protease Prp (99 aa).

The active-site Proton donor is His-16. Cys-28 serves as the catalytic Nucleophile.

Belongs to the Prp family. In terms of assembly, homodimer.

In terms of biological role, an essential cysteine protease that cleaves the N-terminus from ribosomal protein bL27. The protein is Ribosomal processing cysteine protease Prp of Mycoplasma genitalium (strain ATCC 33530 / DSM 19775 / NCTC 10195 / G37) (Mycoplasmoides genitalium).